An 89-amino-acid chain; its full sequence is Small ribosomal subunit protein uS15 (89 aa).

It belongs to the universal ribosomal protein uS15 family. As to quaternary structure, part of the 30S ribosomal subunit. Forms a bridge to the 50S subunit in the 70S ribosome, contacting the 23S rRNA.

In terms of biological role, one of the primary rRNA binding proteins, it binds directly to 16S rRNA where it helps nucleate assembly of the platform of the 30S subunit by binding and bridging several RNA helices of the 16S rRNA. Forms an intersubunit bridge (bridge B4) with the 23S rRNA of the 50S subunit in the ribosome. The polypeptide is Small ribosomal subunit protein uS15 (Desulfosudis oleivorans (strain DSM 6200 / JCM 39069 / Hxd3) (Desulfococcus oleovorans)).